A 346-amino-acid chain; its full sequence is tRNA pseudouridine synthase D (346 aa).

D81 functions as the Nucleophile in the catalytic mechanism. The region spanning 157 to 303 (GVPNYFGLQR…MKHERRILRL (147 aa)) is the TRUD domain.

Belongs to the pseudouridine synthase TruD family.

It catalyses the reaction uridine(13) in tRNA = pseudouridine(13) in tRNA. Responsible for synthesis of pseudouridine from uracil-13 in transfer RNAs. The sequence is that of tRNA pseudouridine synthase D from Stutzerimonas stutzeri (strain A1501) (Pseudomonas stutzeri).